The sequence spans 474 residues: Methylenetetrahydrofolate--tRNA-(uracil-5-)-methyltransferase TrmFO (474 aa).

14–19 serves as a coordination point for FAD; that stretch reads GGGLAG.

This sequence belongs to the MnmG family. TrmFO subfamily. Requires FAD as cofactor.

The protein resides in the cytoplasm. It carries out the reaction uridine(54) in tRNA + (6R)-5,10-methylene-5,6,7,8-tetrahydrofolate + NADH + H(+) = 5-methyluridine(54) in tRNA + (6S)-5,6,7,8-tetrahydrofolate + NAD(+). It catalyses the reaction uridine(54) in tRNA + (6R)-5,10-methylene-5,6,7,8-tetrahydrofolate + NADPH + H(+) = 5-methyluridine(54) in tRNA + (6S)-5,6,7,8-tetrahydrofolate + NADP(+). Functionally, catalyzes the folate-dependent formation of 5-methyl-uridine at position 54 (M-5-U54) in all tRNAs. This chain is Methylenetetrahydrofolate--tRNA-(uracil-5-)-methyltransferase TrmFO, found in Caulobacter vibrioides (strain ATCC 19089 / CIP 103742 / CB 15) (Caulobacter crescentus).